Reading from the N-terminus, the 561-residue chain is Asparagine synthetase [glutamine-hydrolyzing] (561 aa).

Cys2 (for GATase activity) is an active-site residue. The Glutamine amidotransferase type-2 domain occupies Cys2–Lys191. L-glutamine contacts are provided by residues Arg49–Val53, Asn75–Glu77, and Asp97. Positions His213–Tyr536 constitute an Asparagine synthetase domain. ATP contacts are provided by residues Leu256, Ile288, and Ser363–Gly364. Lys385 is modified (N6-acetyllysine). Residue Thr545 is modified to Phosphothreonine. Position 557 is a phosphoserine (Ser557).

The catalysed reaction is L-aspartate + L-glutamine + ATP + H2O = L-asparagine + L-glutamate + AMP + diphosphate + H(+). It functions in the pathway amino-acid biosynthesis; L-asparagine biosynthesis; L-asparagine from L-aspartate (L-Gln route): step 1/1. The chain is Asparagine synthetase [glutamine-hydrolyzing] (Asns) from Mus musculus (Mouse).